The sequence spans 129 residues: Succinate dehydrogenase cytochrome b556 subunit (129 aa).

At 1 to 26 (MIRNVKKQRPVNLDLQTIRFPITAIA) the chain is on the cytoplasmic side. A helical transmembrane segment spans residues 27–52 (SILHRVSGVITFIAVGILLWLLGTSL). Residues 53-68 (SSPEGFQQAADIMDGF) lie on the Periplasmic side of the membrane. The helical transmembrane segment at 69 to 89 (IVKFIMWGILTALAYHVIVGI) threads the bilayer. Residue His-84 coordinates heme. At 90-108 (RHMLMDFGYLEETFEAGQR) the chain is on the cytoplasmic side. The helical transmembrane segment at 109 to 129 (SAKISFVITVVLSLLAGVLVW) threads the bilayer.

The protein belongs to the cytochrome b560 family. As to quaternary structure, part of an enzyme complex containing four subunits: a flavoprotein, an iron-sulfur protein, plus two membrane-anchoring proteins, SdhC and SdhD. The complex can form homotrimers. It depends on heme as a cofactor.

It is found in the cell inner membrane. It functions in the pathway carbohydrate metabolism; tricarboxylic acid cycle. Functionally, membrane-anchoring subunit of succinate dehydrogenase (SDH). In Salmonella typhi, this protein is Succinate dehydrogenase cytochrome b556 subunit (sdhC).